A 780-amino-acid chain; its full sequence is E3 UFM1-protein ligase 1 homolog (780 aa).

Residues 403-413 (STSSTNPNHST) show a composition bias toward polar residues. 2 disordered regions span residues 403 to 458 (STSS…RSHI) and 734 to 760 (SSDKQKPEMSEEPKDSDNSNDNQNIDL). 2 stretches are compositionally biased toward basic and acidic residues: residues 443–458 (KDRSTPDDLESTRSHI) and 736–750 (DKQKPEMSEEPKDSD).

This sequence belongs to the UFL1 family.

In terms of biological role, E3 UFM1-protein ligase that mediates ufmylation of target proteins. The polypeptide is E3 UFM1-protein ligase 1 homolog (Trichoplax adhaerens (Trichoplax reptans)).